Here is a 446-residue protein sequence, read N- to C-terminus: Asparagine--tRNA ligase (446 aa).

The protein belongs to the class-II aminoacyl-tRNA synthetase family. As to quaternary structure, homodimer.

It localises to the cytoplasm. The enzyme catalyses tRNA(Asn) + L-asparagine + ATP = L-asparaginyl-tRNA(Asn) + AMP + diphosphate + H(+). The sequence is that of Asparagine--tRNA ligase from Sorangium cellulosum (strain So ce56) (Polyangium cellulosum (strain So ce56)).